Consider the following 365-residue polypeptide: Red-sensitive opsin (365 aa).

The Extracellular portion of the chain corresponds to 1–51; it reads MASQLNEAIFAARRRNDDDDTTRSSVFTYTNSNNTRGPFEGPNYHIAPRWV. Residue Asn-33 is glycosylated (N-linked (GlcNAc...) asparagine). A helical transmembrane segment spans residues 52–76; the sequence is YNLTSIWMIFVVFASVFTNGLVIVA. Residues 77–88 are Cytoplasmic-facing; it reads TLKFKKLRHPLN. Residues 89-113 traverse the membrane as a helical segment; sequence WILVNMAIADLGETVIASTISVFNQ. Over 114–128 the chain is Extracellular; it reads IFGYFILGHPMCVLE. An intrachain disulfide couples Cys-125 to Cys-202. The chain crosses the membrane as a helical span at residues 129–148; sequence GFTVSTCGITALWSLTVIAW. Residues 149-167 lie on the Cytoplasmic side of the membrane; it reads ERWFVVCKPFGNIKFDEKL. Residues 168–191 form a helical membrane-spanning segment; sequence AATGIIFSWVWSAGWCAPPMFGWS. Topologically, residues 192–217 are extracellular; the sequence is RFWPHGLKTSCGPDVFSGSSDPGVQS. The helical transmembrane segment at 218–245 threads the bilayer; that stretch reads YMLVLMITCCIIPLAIIILCYLHVWWTI. Residues 246 to 267 are Cytoplasmic-facing; it reads RQVAQQQKESESTQKAEREVSR. The helical transmembrane segment at 268–291 threads the bilayer; that stretch reads MVVVMIVAYIFCWGPYTFFACFAA. Topologically, residues 292-299 are extracellular; that stretch reads FSPGYSFH. The helical transmembrane segment at 300 to 324 threads the bilayer; sequence PLAAALPAYFAKSATIYNPIIYVFM. Lys-311 carries the post-translational modification N6-(retinylidene)lysine. Residues 325-365 are Cytoplasmic-facing; it reads NRQFRNCIYQMFGKKVDDGSEVSSTSRTEVSSVSNSSVSPA. The segment at 342–365 is disordered; it reads DGSEVSSTSRTEVSSVSNSSVSPA. A compositionally biased stretch (low complexity) spans 345–365; the sequence is EVSSTSRTEVSSVSNSSVSPA.

It belongs to the G-protein coupled receptor 1 family. Opsin subfamily. Post-translationally, phosphorylated on some or all of the serine and threonine residues present in the C-terminal region.

The protein resides in the membrane. Functionally, visual pigments are the light-absorbing molecules that mediate vision. They consist of an apoprotein, opsin, covalently linked to cis-retinal. This chain is Red-sensitive opsin (opn1lw1), found in Xenopus laevis (African clawed frog).